We begin with the raw amino-acid sequence, 1032 residues long: Vacuolar membrane protease (1032 aa).

Topologically, residues 1–11 are cytoplasmic; sequence MRFQNPFAFRP. A helical transmembrane segment spans residues 12 to 32; sequence GPVSFWTTVIYLALVIPLIYV. The Vacuolar portion of the chain corresponds to 33-426; it reads HETVPPAPSD…AWAVFALRGL (394 aa). Residues Asn-50 and Asn-142 are each glycosylated (N-linked (GlcNAc...) asparagine). Residues His-207 and Asp-219 each coordinate Zn(2+). The active-site Proton acceptor is the Glu-253. Zn(2+) is bound by residues Glu-254, Glu-279, and His-352. A helical transmembrane segment spans residues 427-447; sequence FAWSLTLLVATPLILVAITYI. The Cytoplasmic portion of the chain corresponds to 448–482; the sequence is LARKDKYYFFSRDIKMHHDINDDPVVLGGWKGFLR. The helical transmembrane segment at 483 to 503 threads the bilayer; that stretch reads FPFALVFAGALTIASTLLLAK. Over 504–511 the chain is Vacuolar; the sequence is FNPLIIYS. The helical transmembrane segment at 512–532 threads the bilayer; that stretch reads SPYAVWSMTLSIFYFSFWLIM. At 533–545 the chain is on the cytoplasmic side; it reads RGASFIRPSALHR. A helical transmembrane segment spans residues 546-566; sequence GYVLIWLFALGWGLQVVGAVA. Residues 567–573 are Vacuolar-facing; sequence EDRLHIA. A helical transmembrane segment spans residues 574-594; that stretch reads ALYATVFLQSAVFLALFISLL. Residues 595 to 708 are Cytoplasmic-facing; sequence EQFALLGKHD…WSGRLPSWTW (114 aa). Residues 616-631 show a composition bias toward basic and acidic residues; it reads RDISSHGTDHESRPQP. Residues 616–666 are disordered; the sequence is RDISSHGTDHESRPQPEEEPAQPEGDEDESEDATETTPLRANEPGYGSSTR. A compositionally biased stretch (acidic residues) spans 632–649; that stretch reads EEEPAQPEGDEDESEDAT. A helical membrane pass occupies residues 709–729; that stretch reads IIQFLLLAPVPVILFGNLGLV. Over 730–745 the chain is Vacuolar; it reads AMSALQMTGTDGGSLL. Residues 746 to 766 traverse the membrane as a helical segment; that stretch reads VPVLTLGIVSIFLLLPLTPFI. Topologically, residues 767 to 773 are cytoplasmic; that stretch reads HRVSHHV. Residues 774-794 form a helical membrane-spanning segment; the sequence is PMFLLCVFAGTFIYNLVAFPF. The Vacuolar portion of the chain corresponds to 795-1032; that stretch reads SDSHRFKFYF…LVEVRKTYKV (238 aa). 2 N-linked (GlcNAc...) asparagine glycosylation sites follow: Asn-812 and Asn-884.

It belongs to the peptidase M28 family. The cofactor is Zn(2+).

It localises to the vacuole membrane. May be involved in vacuolar sorting and osmoregulation. This chain is Vacuolar membrane protease, found in Fusarium vanettenii (strain ATCC MYA-4622 / CBS 123669 / FGSC 9596 / NRRL 45880 / 77-13-4) (Fusarium solani subsp. pisi).